The sequence spans 426 residues: Adenylosuccinate synthetase (426 aa).

GTP is bound by residues 12-18 (GDEGKGK) and 40-42 (GHT). The Proton acceptor role is filled by Asp13. 2 residues coordinate Mg(2+): Asp13 and Gly40. IMP is bound by residues 13–16 (DEGK), 38–41 (NAGH), Thr131, Arg145, Gln226, Thr241, and Arg305. The active-site Proton donor is His41. A substrate-binding site is contributed by 301–307 (ATTGRKR). Residues Arg307, 333–335 (KLD), and 415–417 (SVG) contribute to the GTP site.

It belongs to the adenylosuccinate synthetase family. In terms of assembly, homodimer. Mg(2+) serves as cofactor.

It is found in the cytoplasm. It carries out the reaction IMP + L-aspartate + GTP = N(6)-(1,2-dicarboxyethyl)-AMP + GDP + phosphate + 2 H(+). The protein operates within purine metabolism; AMP biosynthesis via de novo pathway; AMP from IMP: step 1/2. In terms of biological role, plays an important role in the de novo pathway of purine nucleotide biosynthesis. Catalyzes the first committed step in the biosynthesis of AMP from IMP. The protein is Adenylosuccinate synthetase of Nitratidesulfovibrio vulgaris (strain ATCC 29579 / DSM 644 / CCUG 34227 / NCIMB 8303 / VKM B-1760 / Hildenborough) (Desulfovibrio vulgaris).